We begin with the raw amino-acid sequence, 313 residues long: PGR5-like protein 1B, chloroplastic (313 aa).

The transit peptide at 1–49 directs the protein to the chloroplast; that stretch reads MAFTLTIPRFSAISRKPITCSSSRTQCPAPFTHGRSISLRRRLTLLPLK. A50 carries the N-acetylalanine modification. The Stromal portion of the chain corresponds to 50–187; that stretch reads ASTDQSGQVG…KVYSDLAIDY (138 aa). Cysteines 71 and 172 form a disulfide. A helical membrane pass occupies residues 188 to 208; sequence FKMFLLNVPATVVALGLFFFL. The Lumenal, thylakoid portion of the chain corresponds to 209–225; it reads DDITGFEITYLLELPEP. A helical transmembrane segment spans residues 226-246; that stretch reads FSFIFTWFAAVPAIVYLALSL. The Stromal portion of the chain corresponds to 247–313; the sequence is TKLILKDFLI…LITLPEGGKA (67 aa).

The protein belongs to the PGR5 family. Homodimer and heterodimer with PGR5. Interacts with PGR5, FD2, psaD1, LFNR1 and LFNR2. Also interacts with petC and a Fe-containing cofactor (FCC). Disulfide bonds; Cys-289 and Cys-292 are probably involved in the formation of disulfide bridges with 'Cys-11' and 'Cys-105' of PGR5 while Cys-261 and Cys-264 are probably involved in the binding of a Fe-containing cofactor (FCC).

The protein resides in the plastid. The protein localises to the chloroplast thylakoid membrane. Inhibited by antimycin A. In terms of biological role, ferredoxin-plastoquinone reductase involved in cyclic electron flow (CEF) around photosystem I. The homodimer is probably not involved in CEF. The polypeptide is PGR5-like protein 1B, chloroplastic (PGRL1B) (Arabidopsis thaliana (Mouse-ear cress)).